We begin with the raw amino-acid sequence, 801 residues long: Sucrose synthase isoform 2 (801 aa).

A GT-B glycosyltransferase region spans residues 271–748; it reads MIFNVVILSP…GLKRIQEKYT (478 aa).

This sequence belongs to the glycosyltransferase 1 family. Plant sucrose synthase subfamily. Homotetramer. In terms of tissue distribution, exclusively expressed in flowers.

It carries out the reaction an NDP-alpha-D-glucose + D-fructose = a ribonucleoside 5'-diphosphate + sucrose + H(+). In terms of biological role, sucrose-cleaving enzyme that provides UDP-glucose and fructose for various metabolic pathways. This Daucus carota (Wild carrot) protein is Sucrose synthase isoform 2.